Here is a 221-residue protein sequence, read N- to C-terminus: Chaperone protein TorD (221 aa).

Belongs to the TorD/DmsD family. TorD subfamily.

Its subcellular location is the cytoplasm. Functionally, involved in the biogenesis of TorA. Acts on TorA before the insertion of the molybdenum cofactor and, as a result, probably favors a conformation of the apoenzyme that is competent for acquiring the cofactor. This chain is Chaperone protein TorD, found in Psychrobacter sp. (strain PRwf-1).